The following is a 166-amino-acid chain: Ribosome maturation factor RimP (166 aa).

The protein belongs to the RimP family.

The protein localises to the cytoplasm. In terms of biological role, required for maturation of 30S ribosomal subunits. In Psychrobacter cryohalolentis (strain ATCC BAA-1226 / DSM 17306 / VKM B-2378 / K5), this protein is Ribosome maturation factor RimP.